The chain runs to 157 residues: UPF0262 protein Atu0536 (157 aa).

Belongs to the UPF0262 family.

The protein is UPF0262 protein Atu0536 of Agrobacterium fabrum (strain C58 / ATCC 33970) (Agrobacterium tumefaciens (strain C58)).